Reading from the N-terminus, the 706-residue chain is Ribosomal RNA large subunit methyltransferase K/L (706 aa).

The THUMP domain maps to 43–154 (LLYQSLLWSR…RDMASVALDL (112 aa)).

This sequence belongs to the methyltransferase superfamily. RlmKL family.

The protein localises to the cytoplasm. The enzyme catalyses guanosine(2445) in 23S rRNA + S-adenosyl-L-methionine = N(2)-methylguanosine(2445) in 23S rRNA + S-adenosyl-L-homocysteine + H(+). The catalysed reaction is guanosine(2069) in 23S rRNA + S-adenosyl-L-methionine = N(2)-methylguanosine(2069) in 23S rRNA + S-adenosyl-L-homocysteine + H(+). Its function is as follows. Specifically methylates the guanine in position 2445 (m2G2445) and the guanine in position 2069 (m7G2069) of 23S rRNA. The chain is Ribosomal RNA large subunit methyltransferase K/L from Serratia proteamaculans (strain 568).